The following is a 178-amino-acid chain: ATP-dependent protease subunit HslV (178 aa).

Residue Thr7 is part of the active site. Na(+)-binding residues include Gly162, Cys165, and Thr168.

It belongs to the peptidase T1B family. HslV subfamily. A double ring-shaped homohexamer of HslV is capped on each side by a ring-shaped HslU homohexamer. The assembly of the HslU/HslV complex is dependent on binding of ATP.

The protein resides in the cytoplasm. The catalysed reaction is ATP-dependent cleavage of peptide bonds with broad specificity.. With respect to regulation, allosterically activated by HslU binding. Protease subunit of a proteasome-like degradation complex believed to be a general protein degrading machinery. This Sulfurihydrogenibium sp. (strain YO3AOP1) protein is ATP-dependent protease subunit HslV.